The sequence spans 138 residues: Large ribosomal subunit protein bL19 (138 aa).

The protein belongs to the bacterial ribosomal protein bL19 family.

In terms of biological role, this protein is located at the 30S-50S ribosomal subunit interface and may play a role in the structure and function of the aminoacyl-tRNA binding site. In Rickettsia peacockii (strain Rustic), this protein is Large ribosomal subunit protein bL19.